The primary structure comprises 743 residues: Threonine synthase-like 1 (743 aa).

At lysine 281 the chain carries N6-acetyllysine. Lysine 351 is modified (N6-(pyridoxal phosphate)lysine).

The protein belongs to the threonine synthase family. Requires pyridoxal 5'-phosphate as cofactor.

The protein is Threonine synthase-like 1 (THNSL1) of Homo sapiens (Human).